Consider the following 242-residue polypeptide: Lactate utilization protein A 2 (242 aa).

The protein belongs to the LutA/YkgE family.

Its function is as follows. Is involved in L-lactate degradation and allows cells to grow with lactate as the sole carbon source. In Bacillus cereus (strain ZK / E33L), this protein is Lactate utilization protein A 2.